A 2193-amino-acid polypeptide reads, in one-letter code: Genome polyprotein (2193 aa).

Glycine 2 carries N-myristoyl glycine; by host lipidation. The Cytoplasmic portion of the chain corresponds to 2 to 1503; that stretch reads GAQVSTQKTG…HVSRAFICLQ (1502 aa). Residues 565–582 are amphipathic alpha-helix; sequence QLLQGDVEEAVNRAVARV. Active-site for protease 2A activity residues include histidine 880 and aspartate 898. The Zn(2+) site is built by cysteine 915 and cysteine 917. Catalysis depends on cysteine 969, which acts as the For protease 2A activity. Zn(2+) is bound by residues cysteine 975 and histidine 977. The membrane-binding stretch occupies residues 1109–1181; sequence SNGWLKKFTE…EQSAPSQSDQ (73 aa). An oligomerization region spans residues 1109–1247; the sequence is SNGWLKKFTE…SPGAGKSVAT (139 aa). Positions 1130–1134 are RNA-binding; it reads AIKIQ. Positions 1213-1369 constitute an SF3 helicase domain; sequence EKKMSNYIQF…SMYSQNGKIN (157 aa). The Zn(2+) site is built by cysteine 1377, cysteine 1389, and cysteine 1394. Residues 1377-1394 form a C4-type; degenerate zinc finger; it reads CDEECCPVNFKRCCPLVC. Residues 1421-1428 are RNA-binding; it reads EYNHRHSV. The tract at residues 1432–1437 is oligomerization; the sequence is LEALFQ. The stretch at 1504-1519 is an intramembrane region; the sequence is ALTTFVSVAGIIYIIY. Residues 1520 to 2193 are Cytoplasmic-facing; it reads KLFAGFQGAY…TLRRKWLDSF (674 aa). O-(5'-phospho-RNA)-tyrosine is present on tyrosine 1529. In terms of domain architecture, Peptidase C3 spans 1549-1727; sequence GPAFEFAVAM…FSAALLRHYF (179 aa). Residues histidine 1588, glutamate 1619, and cysteine 1695 each act as for protease 3C activity in the active site. Residues 1958–2074 form the RdRp catalytic domain; that stretch reads GHLIAFDYSG…SYPWPIDASL (117 aa). Positions 1964 and 2060 each coordinate Mg(2+).

It belongs to the picornaviruses polyprotein family. Interacts with capsid protein VP1 and capsid protein VP3 to form heterotrimeric protomers. As to quaternary structure, interacts with capsid protein VP0, and capsid protein VP3 to form heterotrimeric protomers. Five protomers subsequently associate to form pentamers which serve as building blocks for the capsid. Interacts with capsid protein VP2, capsid protein VP3 and capsid protein VP4 following cleavage of capsid protein VP0. In terms of assembly, interacts with capsid protein VP1 and capsid protein VP3 in the mature capsid. Interacts with host CD55; this interaction promotes virus attachment to the host cell and subsequent internalization. Interacts with capsid protein VP0 and capsid protein VP1 to form heterotrimeric protomers. Five protomers subsequently associate to form pentamers which serve as building blocks for the capsid. Interacts with capsid protein VP4 in the mature capsid. Interacts with protein 2C; this interaction may be important for virion morphogenesis. Interacts with host CD55; this interaction promotes virus attachment to the host cell and subsequent internalization. As to quaternary structure, interacts with capsid protein VP1 and capsid protein VP3. In terms of assembly, homodimer. Homohexamer; forms a hexameric ring structure with 6-fold symmetry characteristic of AAA+ ATPases. Interacts (via N-terminus) with host RTN3 (via reticulon domain); this interaction is important for viral replication. Interacts with capsid protein VP3; this interaction may be important for virion morphogenesis. As to quaternary structure, interacts with protein 3CD. In terms of assembly, homodimer. Interacts with host GBF1. Interacts (via GOLD domain) with host ACBD3 (via GOLD domain); this interaction allows the formation of a viral protein 3A/ACBD3 heterotetramer with a 2:2 stoichiometry, which will stimulate the recruitment of host PI4KB in order to synthesize PI4P at the viral RNA replication sites. Interacts with RNA-directed RNA polymerase. As to quaternary structure, interacts with protein 3AB and with RNA-directed RNA polymerase. In terms of assembly, interacts with Viral protein genome-linked and with protein 3CD. Mg(2+) serves as cofactor. Specific enzymatic cleavages in vivo by the viral proteases yield processing intermediates and the mature proteins. Post-translationally, myristoylation is required for the formation of pentamers during virus assembly. Further assembly of 12 pentamers and a molecule of genomic RNA generates the provirion. In terms of processing, during virion maturation, immature virions are rendered infectious following cleavage of VP0 into VP4 and VP2. This maturation seems to be an autocatalytic event triggered by the presence of RNA in the capsid and it is followed by a conformational change infectious virion. Myristoylation is required during RNA encapsidation and formation of the mature virus particle. Post-translationally, VPg is uridylylated by the polymerase into VPg-pUpU. This acts as a nucleotide-peptide primer for the genomic RNA replication.

The protein resides in the virion. It is found in the host cytoplasm. Its subcellular location is the host cytoplasmic vesicle membrane. It localises to the host nucleus. It carries out the reaction a ribonucleoside 5'-triphosphate + H2O = a ribonucleoside 5'-diphosphate + phosphate + H(+). It catalyses the reaction Selective cleavage of Tyr-|-Gly bond in the picornavirus polyprotein.. The enzyme catalyses RNA(n) + a ribonucleoside 5'-triphosphate = RNA(n+1) + diphosphate. The catalysed reaction is Selective cleavage of Gln-|-Gly bond in the poliovirus polyprotein. In other picornavirus reactions Glu may be substituted for Gln, and Ser or Thr for Gly.. Replication or transcription is subject to high level of random mutations by the nucleotide analog ribavirin. Its function is as follows. Forms an icosahedral capsid of pseudo T=3 symmetry with capsid proteins VP2 and VP3. The capsid is 300 Angstroms in diameter, composed of 60 copies of each capsid protein and enclosing the viral positive strand RNA genome. Capsid protein VP1 mainly forms the vertices of the capsid. Capsid protein VP1 interacts with host cell receptor to provide virion attachment to target host cells. This attachment induces virion internalization. Tyrosine kinases are probably involved in the entry process. After binding to its receptor, the capsid undergoes conformational changes. Capsid protein VP1 N-terminus (that contains an amphipathic alpha-helix) and capsid protein VP4 are externalized. Together, they shape a pore in the host membrane through which viral genome is translocated to host cell cytoplasm. Functionally, forms an icosahedral capsid of pseudo T=3 symmetry with capsid proteins VP2 and VP3. The capsid is 300 Angstroms in diameter, composed of 60 copies of each capsid protein and enclosing the viral positive strand RNA genome. Lies on the inner surface of the capsid shell. After binding to the host receptor, the capsid undergoes conformational changes. Capsid protein VP4 is released, Capsid protein VP1 N-terminus is externalized, and together, they shape a pore in the host membrane through which the viral genome is translocated into the host cell cytoplasm. In terms of biological role, component of immature procapsids, which is cleaved into capsid proteins VP4 and VP2 after maturation. Allows the capsid to remain inactive before the maturation step. Its function is as follows. Cysteine protease that cleaves viral polyprotein and specific host proteins. It is responsible for the autocatalytic cleavage between the P1 and P2 regions, which is the first cleavage occurring in the polyprotein. Also cleaves the host translation initiation factor EIF4G1, in order to shut down the capped cellular mRNA translation. Inhibits the host nucleus-cytoplasm protein and RNA trafficking by cleaving host members of the nuclear pores. Counteracts stress granule formation probably by antagonizing its assembly or promoting its dissassembly. Functionally, plays an essential role in the virus replication cycle by acting as a viroporin. Creates a pore in the host endoplasmic reticulum and as a consequence releases Ca2+ in the cytoplasm of infected cell. In turn, high levels of cytoplasmic calcium may trigger membrane trafficking and transport of viral ER-associated proteins to viroplasms, sites of viral genome replication. Induces and associates with structural rearrangements of intracellular membranes. Displays RNA-binding, nucleotide binding and NTPase activities. May play a role in virion morphogenesis and viral RNA encapsidation by interacting with the capsid protein VP3. In terms of biological role, localizes the viral replication complex to the surface of membranous vesicles. Together with protein 3CD binds the Cis-Active RNA Element (CRE) which is involved in RNA synthesis initiation. Acts as a cofactor to stimulate the activity of 3D polymerase, maybe through a nucleid acid chaperone activity. Its function is as follows. Localizes the viral replication complex to the surface of membranous vesicles. It inhibits host cell endoplasmic reticulum-to-Golgi apparatus transport and causes the disassembly of the Golgi complex, possibly through GBF1 interaction. This would result in depletion of MHC, trail receptors and IFN receptors at the host cell surface. Plays an essential role in viral RNA replication by recruiting ACBD3 and PI4KB at the viral replication sites, thereby allowing the formation of the rearranged membranous structures where viral replication takes place. Functionally, acts as a primer for viral RNA replication and remains covalently bound to viral genomic RNA. VPg is uridylylated prior to priming replication into VPg-pUpU. The oriI viral genomic sequence may act as a template for this. The VPg-pUpU is then used as primer on the genomic RNA poly(A) by the RNA-dependent RNA polymerase to replicate the viral genome. During genome replication, the VPg-RNA linkage is removed by the host TDP2, thereby accelerating replication. During the late stage of the replication cycle, host TDP2 is excluded from sites of viral RNA synthesis and encapsidation, allowing for the generation of progeny virions. Involved in the viral replication complex and viral polypeptide maturation. It exhibits protease activity with a specificity and catalytic efficiency that is different from protease 3C. Protein 3CD lacks polymerase activity. Protein 3CD binds to the 5'UTR of the viral genome. In terms of biological role, replicates the viral genomic RNA on the surface of intracellular membranes. May form linear arrays of subunits that propagate along a strong head-to-tail interaction called interface-I. Covalently attaches UMP to a tyrosine of VPg, which is used to prime RNA synthesis. The positive stranded RNA genome is first replicated at virus induced membranous vesicles, creating a dsRNA genomic replication form. This dsRNA is then used as template to synthesize positive stranded RNA genomes. ss(+)RNA genomes are either translated, replicated or encapsidated. Its function is as follows. Major viral protease that mediates proteolytic processing of the polyprotein. Cleaves host EIF5B, contributing to host translation shutoff. Also cleaves host PABPC1, contributing to host translation shutoff. Cleaves host NLRP1, triggers host N-glycine-mediated degradation of the autoinhibitory NLRP1 N-terminal fragment. This chain is Genome polyprotein, found in Echovirus 12 (strain Travis).